The chain runs to 434 residues: Homogentisate 1,2-dioxygenase (434 aa).

Histidine 289 serves as the catalytic Proton acceptor. 2 residues coordinate Fe cation: histidine 332 and glutamate 338. Homogentisate contacts are provided by tyrosine 347 and histidine 368. Histidine 368 serves as a coordination point for Fe cation.

This sequence belongs to the homogentisate dioxygenase family. As to quaternary structure, hexamer; dimer of trimers. It depends on Fe cation as a cofactor.

It carries out the reaction homogentisate + O2 = 4-maleylacetoacetate + H(+). It functions in the pathway amino-acid degradation; L-phenylalanine degradation; acetoacetate and fumarate from L-phenylalanine: step 4/6. Its function is as follows. Involved in the catabolism of homogentisate (2,5-dihydroxyphenylacetate or 2,5-OH-PhAc), a central intermediate in the degradation of phenylalanine and tyrosine. Catalyzes the oxidative ring cleavage of the aromatic ring of homogentisate to yield maleylacetoacetate. This Pseudomonas fluorescens (strain ATCC BAA-477 / NRRL B-23932 / Pf-5) protein is Homogentisate 1,2-dioxygenase.